The chain runs to 3096 residues: Unconventional myosin-XVB (3096 aa).

Disordered regions lie at residues 1–330 (MGRN…GPED), 389–489 (RPPE…GWGR), 508–540 (GGMP…ETPD), and 553–649 (AGRA…GPRL). Over residues 19–33 (ASGEQESGSASADGA) the composition is skewed to low complexity. Positions 34–50 (PSRERRSDRGQADRAKP) are enriched in basic and acidic residues. The span at 124 to 143 (RRRRKRKDKGPSARRGRRTP) shows a compositional bias: basic residues. Composition is skewed to basic and acidic residues over residues 212-222 (DWPHADTRGRE) and 261-288 (TFED…RGAE). Over residues 307 to 330 (AVGQVPAAAGEGEAGAAAGAGPED) the composition is skewed to low complexity. A compositionally biased stretch (basic and acidic residues) spans 406–416 (WGRRKPDEGRG). The span at 417–426 (HGRGSKGRGR) shows a compositional bias: basic residues. The segment covering 427–489 (GKADEGRGHE…HQRGYEGWGR (63 aa)) has biased composition (basic and acidic residues). The region spanning 720–1394 (EDMEDLARLR…GWQRLEELRD (675 aa)) is the Myosin motor domain. 818 to 825 (GHSGSGKT) is a binding site for ATP. The actin-binding stretch occupies residues 1273–1295 (LEDLIARLGRSHVYFIQCLTPNP). Positions 1414–1443 (RQRVLPRMQARMRGFQARKRYLRRRAALGQ) constitute an IQ domain. Residues 1551–1702 (RPGQPLAKPL…PTQLEWLAGW (152 aa)) form the MyTH4 1 domain. 3 disordered regions span residues 1802–1833 (PGIQ…VQRS), 1963–2026 (MQQR…PKSF), and 2040–2262 (QITV…LPED). Over residues 1808 to 1820 (SLPPGPPPGPAPT) the composition is skewed to pro residues. The segment covering 1963 to 1980 (MQQRQQQARASEAASQAS) has biased composition (low complexity). Residues 2059–2076 (AQEEEEEEEEEEEQEEQE) show a composition bias toward acidic residues. Positions 2102–2116 (APKEAEAEPAKETAA) are enriched in basic and acidic residues. A compositionally biased stretch (pro residues) spans 2159–2170 (GPVPVPVQPSRP). The segment covering 2176-2185 (RKIDPKDEAL) has biased composition (basic and acidic residues). Pro residues-rich tracts occupy residues 2199–2217 (MLSP…PRPK) and 2247–2261 (HTPP…PLPE). One can recognise an SH3 domain in the interval 2481 to 2542 (KDSGYVIALR…PADIVQPAAA (62 aa)). Residues 2548-2567 (SKEQRSGWHKGQLSNGEPGL) are disordered. Positions 2643–2789 (YTKAPIQESL…PPPGEMKAFL (147 aa)) constitute a MyTH4 2 domain. An FERM domain is found at 2795–3096 (RLLLIHLPGG…ASCTEWPSIN (302 aa)).

The protein belongs to the TRAFAC class myosin-kinesin ATPase superfamily. Myosin family. As to expression, detected in brain, stomach and kidney.

Its subcellular location is the cytoplasm. The sequence is that of Unconventional myosin-XVB from Homo sapiens (Human).